Reading from the N-terminus, the 287-residue chain is 3-hydroxyanthranilate 3,4-dioxygenase (287 aa).

Residues 1 to 163 (MTNQSLHVNI…SKENETGKPD (163 aa)) form a domain A (catalytic) region. An O2-binding site is contributed by Arg-46. Fe cation is bound by residues His-50, Glu-56, and His-94. Position 56 (Glu-56) interacts with substrate. Residues Arg-98 and Glu-108 each coordinate substrate. The linker stretch occupies residues 164-180 (PANPIKPAPYPLNTMNV). Residues 181–287 (MTPFSFREWV…AQDPDRKRPY (107 aa)) form a domain B region.

Belongs to the 3-HAO family. As to quaternary structure, monomer. The cofactor is Fe(2+).

The protein resides in the cytoplasm. The protein localises to the cytosol. The catalysed reaction is 3-hydroxyanthranilate + O2 = (2Z,4Z)-2-amino-3-carboxymuconate 6-semialdehyde. The protein operates within cofactor biosynthesis; NAD(+) biosynthesis; quinolinate from L-kynurenine: step 3/3. In terms of biological role, catalyzes the oxidative ring opening of 3-hydroxyanthranilate to 2-amino-3-carboxymuconate semialdehyde, which spontaneously cyclizes to quinolinate. The chain is 3-hydroxyanthranilate 3,4-dioxygenase (haao) from Danio rerio (Zebrafish).